We begin with the raw amino-acid sequence, 331 residues long: Phosphate acyltransferase (331 aa).

The protein belongs to the PlsX family. Homodimer. Probably interacts with PlsY.

It localises to the cytoplasm. It carries out the reaction a fatty acyl-[ACP] + phosphate = an acyl phosphate + holo-[ACP]. The protein operates within lipid metabolism; phospholipid metabolism. Its function is as follows. Catalyzes the reversible formation of acyl-phosphate (acyl-PO(4)) from acyl-[acyl-carrier-protein] (acyl-ACP). This enzyme utilizes acyl-ACP as fatty acyl donor, but not acyl-CoA. The chain is Phosphate acyltransferase from Lactococcus lactis subsp. lactis (strain IL1403) (Streptococcus lactis).